We begin with the raw amino-acid sequence, 232 residues long: Ribose-5-phosphate isomerase A (232 aa).

Substrate contacts are provided by residues threonine 28–threonine 31, aspartate 83–aspartate 86, and lysine 96–glycine 99. Glutamate 105 functions as the Proton acceptor in the catalytic mechanism. Lysine 123 is a binding site for substrate.

Belongs to the ribose 5-phosphate isomerase family. In terms of assembly, homodimer.

The enzyme catalyses aldehydo-D-ribose 5-phosphate = D-ribulose 5-phosphate. Its pathway is carbohydrate degradation; pentose phosphate pathway; D-ribose 5-phosphate from D-ribulose 5-phosphate (non-oxidative stage): step 1/1. Catalyzes the reversible conversion of ribose-5-phosphate to ribulose 5-phosphate. The polypeptide is Ribose-5-phosphate isomerase A (Rhodopseudomonas palustris (strain ATCC BAA-98 / CGA009)).